Reading from the N-terminus, the 155-residue chain is Small ribosomal subunit protein uS9 (155 aa).

This sequence belongs to the universal ribosomal protein uS9 family.

The protein is Small ribosomal subunit protein uS9 of Rhizobium etli (strain ATCC 51251 / DSM 11541 / JCM 21823 / NBRC 15573 / CFN 42).